A 555-amino-acid chain; its full sequence is CTP synthase (555 aa).

The interval Met-1–Leu-279 is amidoligase domain. CTP is bound at residue Ser-21. Position 21 (Ser-21) interacts with UTP. Residues Ser-22–Leu-27 and Asp-79 contribute to the ATP site. Residues Asp-79 and Glu-153 each coordinate Mg(2+). Residues Asp-160–Glu-162, Lys-200–Gln-205, and Lys-236 each bind CTP. UTP is bound by residues Lys-200–Gln-205 and Lys-236. The region spanning Thr-304 to Gly-553 is the Glutamine amidotransferase type-1 domain. Gly-367 serves as a coordination point for L-glutamine. Cys-394 functions as the Nucleophile; for glutamine hydrolysis in the catalytic mechanism. Residues Leu-395–Gln-398, Glu-417, and Arg-478 each bind L-glutamine. Active-site residues include His-526 and Glu-528.

Belongs to the CTP synthase family. As to quaternary structure, homotetramer.

It catalyses the reaction UTP + L-glutamine + ATP + H2O = CTP + L-glutamate + ADP + phosphate + 2 H(+). It carries out the reaction L-glutamine + H2O = L-glutamate + NH4(+). The catalysed reaction is UTP + NH4(+) + ATP = CTP + ADP + phosphate + 2 H(+). It functions in the pathway pyrimidine metabolism; CTP biosynthesis via de novo pathway; CTP from UDP: step 2/2. Allosterically activated by GTP, when glutamine is the substrate; GTP has no effect on the reaction when ammonia is the substrate. The allosteric effector GTP functions by stabilizing the protein conformation that binds the tetrahedral intermediate(s) formed during glutamine hydrolysis. Inhibited by the product CTP, via allosteric rather than competitive inhibition. In terms of biological role, catalyzes the ATP-dependent amination of UTP to CTP with either L-glutamine or ammonia as the source of nitrogen. Regulates intracellular CTP levels through interactions with the four ribonucleotide triphosphates. This Corynebacterium jeikeium (strain K411) protein is CTP synthase.